We begin with the raw amino-acid sequence, 628 residues long: Hemocyanin II (628 aa).

Blocked amino end (Thr); partial is present on threonine 1. Cu cation-binding residues include histidine 173, histidine 177, histidine 204, histidine 324, histidine 328, and histidine 364. N-linked (GlcNAc...) asparagine glycosylation occurs at asparagine 449. Cystine bridges form between cysteine 534–cysteine 576 and cysteine 536–cysteine 583.

The protein belongs to the tyrosinase family. Hemocyanin subfamily. Hexamer or a multiple thereof. In terms of tissue distribution, hemolymph.

The protein localises to the secreted. It is found in the extracellular space. Hemocyanins are copper-containing oxygen carriers occurring freely dissolved in the hemolymph of many mollusks and arthropods. This Limulus polyphemus (Atlantic horseshoe crab) protein is Hemocyanin II.